We begin with the raw amino-acid sequence, 54 residues long: MPQLNPKPWFMILFFSWVIFLTIIPTKIINHIQPNDPTQVDAKEHKNDTWNWPW.

A helical transmembrane segment spans residues Trp-9–Ile-29. Residues Asn-35–Trp-54 are disordered.

The protein belongs to the ATPase protein 8 family. Component of the ATP synthase complex composed at least of ATP5F1A/subunit alpha, ATP5F1B/subunit beta, ATP5MC1/subunit c (homooctomer), MT-ATP6/subunit a, MT-ATP8/subunit 8, ATP5ME/subunit e, ATP5MF/subunit f, ATP5MG/subunit g, ATP5MK/subunit k, ATP5MJ/subunit j, ATP5F1C/subunit gamma, ATP5F1D/subunit delta, ATP5F1E/subunit epsilon, ATP5PF/subunit F6, ATP5PB/subunit b, ATP5PD/subunit d, ATP5PO/subunit OSCP. ATP synthase complex consists of a soluble F(1) head domain (subunits alpha(3) and beta(3)) - the catalytic core - and a membrane F(0) domain - the membrane proton channel (subunits c, a, 8, e, f, g, k and j). These two domains are linked by a central stalk (subunits gamma, delta, and epsilon) rotating inside the F1 region and a stationary peripheral stalk (subunits F6, b, d, and OSCP).

The protein resides in the mitochondrion membrane. Functionally, subunit 8, of the mitochondrial membrane ATP synthase complex (F(1)F(0) ATP synthase or Complex V) that produces ATP from ADP in the presence of a proton gradient across the membrane which is generated by electron transport complexes of the respiratory chain. ATP synthase complex consist of a soluble F(1) head domain - the catalytic core - and a membrane F(1) domain - the membrane proton channel. These two domains are linked by a central stalk rotating inside the F(1) region and a stationary peripheral stalk. During catalysis, ATP synthesis in the catalytic domain of F(1) is coupled via a rotary mechanism of the central stalk subunits to proton translocation. In vivo, can only synthesize ATP although its ATP hydrolase activity can be activated artificially in vitro. Part of the complex F(0) domain. The polypeptide is ATP synthase F(0) complex subunit 8 (Danio rerio (Zebrafish)).